The chain runs to 369 residues: tRNA 2-selenouridine synthase (369 aa).

Positions 15 to 138 (MLSGHPMMDV…MRQYLIEVID (124 aa)) constitute a Rhodanese domain. Cys-98 acts as the S-selanylcysteine intermediate in catalysis.

This sequence belongs to the SelU family. Monomer.

The enzyme catalyses 5-methylaminomethyl-2-thiouridine(34) in tRNA + selenophosphate + (2E)-geranyl diphosphate + H2O + H(+) = 5-methylaminomethyl-2-selenouridine(34) in tRNA + (2E)-thiogeraniol + phosphate + diphosphate. It carries out the reaction 5-methylaminomethyl-2-thiouridine(34) in tRNA + (2E)-geranyl diphosphate = 5-methylaminomethyl-S-(2E)-geranyl-thiouridine(34) in tRNA + diphosphate. The catalysed reaction is 5-methylaminomethyl-S-(2E)-geranyl-thiouridine(34) in tRNA + selenophosphate + H(+) = 5-methylaminomethyl-2-(Se-phospho)selenouridine(34) in tRNA + (2E)-thiogeraniol. It catalyses the reaction 5-methylaminomethyl-2-(Se-phospho)selenouridine(34) in tRNA + H2O = 5-methylaminomethyl-2-selenouridine(34) in tRNA + phosphate. Involved in the post-transcriptional modification of the uridine at the wobble position (U34) of tRNA(Lys), tRNA(Glu) and tRNA(Gln). Catalyzes the conversion of 2-thiouridine (S2U-RNA) to 2-selenouridine (Se2U-RNA). Acts in a two-step process involving geranylation of 2-thiouridine (S2U) to S-geranyl-2-thiouridine (geS2U) and subsequent selenation of the latter derivative to 2-selenouridine (Se2U) in the tRNA chain. This Shewanella sediminis (strain HAW-EB3) protein is tRNA 2-selenouridine synthase.